We begin with the raw amino-acid sequence, 399 residues long: Na(+)/H(+) antiporter NhaA (399 aa).

11 helical membrane passes run 12 to 32 (LDIAAGVILVGAAVLALIAAN), 60 to 80 (LLLWINDGLMAVFFLLVGLEI), 94 to 114 (LAALPAVAAVGGMVVPALIYA), 126 to 146 (GWAIPAATDIAFALGILTLLG), 155 to 175 (IFLTALAIIDDLGAILIIAFF), 178 to 198 (ASLSPLALLLAAACLALLIGL), 206 to 226 (LWPYLLIGVVLWVCVLKSGVH), 263 to 283 (PWVTYAILPLFAFANAGVSLA), 284 to 304 (GLPPSALLAPVPLGIVLGLFL), 336 to 356 (GVALITGVGFTMSLFIGTLAF), and 372 to 392 (LGVLSGSLLSGVIGYLVLRLS).

It belongs to the NhaA Na(+)/H(+) (TC 2.A.33) antiporter family.

The protein resides in the cell inner membrane. The enzyme catalyses Na(+)(in) + 2 H(+)(out) = Na(+)(out) + 2 H(+)(in). Functionally, na(+)/H(+) antiporter that extrudes sodium in exchange for external protons. The chain is Na(+)/H(+) antiporter NhaA from Rhodospirillum rubrum (strain ATCC 11170 / ATH 1.1.1 / DSM 467 / LMG 4362 / NCIMB 8255 / S1).